The primary structure comprises 232 residues: Orotidine 5'-phosphate decarboxylase (232 aa).

Residues Asp13, Lys35, 62-71 (DLKFHDIPNT), Thr122, Arg182, Gln191, Gly211, and Arg212 contribute to the substrate site. The active-site Proton donor is the Lys64.

It belongs to the OMP decarboxylase family. Type 1 subfamily. Homodimer.

It catalyses the reaction orotidine 5'-phosphate + H(+) = UMP + CO2. Its pathway is pyrimidine metabolism; UMP biosynthesis via de novo pathway; UMP from orotate: step 2/2. Catalyzes the decarboxylation of orotidine 5'-monophosphate (OMP) to uridine 5'-monophosphate (UMP). In Pseudomonas savastanoi pv. phaseolicola (strain 1448A / Race 6) (Pseudomonas syringae pv. phaseolicola (strain 1448A / Race 6)), this protein is Orotidine 5'-phosphate decarboxylase.